A 624-amino-acid chain; its full sequence is Chaperone protein HtpG (624 aa).

Positions 1–336 (MKGQETRGFQ…SNDLPLNVSR (336 aa)) are a; substrate-binding. Residues 337–552 (EILQDSSVTR…ADEMSTQMAK (216 aa)) form a b region. The segment at 553–624 (LFAAAGQAAP…IRRMNQLLAS (72 aa)) is c.

It belongs to the heat shock protein 90 family. In terms of assembly, homodimer.

It is found in the cytoplasm. In terms of biological role, molecular chaperone. Has ATPase activity. This Klebsiella pneumoniae subsp. pneumoniae (strain ATCC 700721 / MGH 78578) protein is Chaperone protein HtpG.